We begin with the raw amino-acid sequence, 483 residues long: Glutamate--tRNA ligase (483 aa).

The short motif at 9 to 19 (PSPTGNLHIGT) is the 'HIGH' region element. Residues 250 to 254 (KLSKR) carry the 'KMSKS' region motif. Lysine 253 lines the ATP pocket.

Belongs to the class-I aminoacyl-tRNA synthetase family. Glutamate--tRNA ligase type 1 subfamily. In terms of assembly, monomer.

The protein resides in the cytoplasm. The enzyme catalyses tRNA(Glu) + L-glutamate + ATP = L-glutamyl-tRNA(Glu) + AMP + diphosphate. Catalyzes the attachment of glutamate to tRNA(Glu) in a two-step reaction: glutamate is first activated by ATP to form Glu-AMP and then transferred to the acceptor end of tRNA(Glu). This is Glutamate--tRNA ligase from Synechocystis sp. (strain ATCC 27184 / PCC 6803 / Kazusa).